A 306-amino-acid polypeptide reads, in one-letter code: UDP-N-acetylenolpyruvoylglucosamine reductase (306 aa).

The region spanning 28-193 (KVGGPADFLA…VSAKFSLKPG (166 aa)) is the FAD-binding PCMH-type domain. The active site involves R172. The active-site Proton donor is the S222. E292 is an active-site residue.

It belongs to the MurB family. FAD serves as cofactor.

The protein resides in the cytoplasm. It carries out the reaction UDP-N-acetyl-alpha-D-muramate + NADP(+) = UDP-N-acetyl-3-O-(1-carboxyvinyl)-alpha-D-glucosamine + NADPH + H(+). It functions in the pathway cell wall biogenesis; peptidoglycan biosynthesis. In terms of biological role, cell wall formation. This Streptococcus mutans serotype c (strain ATCC 700610 / UA159) protein is UDP-N-acetylenolpyruvoylglucosamine reductase.